A 105-amino-acid chain; its full sequence is Serine protease inhibitor Kazal-type 8 (105 aa).

Positions 1 to 21 (MKVIFSVAVLVLASSVWTSLA) are cleaved as a signal peptide. Cystine bridges form between Cys-44–Cys-78, Cys-51–Cys-75, and Cys-64–Cys-96. The 55-residue stretch at 44-98 (CIKNIQLCWILSYFKVSEPICGSNQVTYEGECHLCSGILYEDRTVIKVHDGPCEH) folds into the Kazal-like domain.

In terms of tissue distribution, expressed in epydiymis, in the cauda, corpus and caput.

The protein resides in the secreted. Its function is as follows. Probable serine protease inhibitor. In Mus musculus (Mouse), this protein is Serine protease inhibitor Kazal-type 8 (Spink8).